The primary structure comprises 388 residues: RNA binding motif protein, X-linked-like-1 (388 aa).

Positions 8–86 (GKLFIGGLNT…KAIKVEQATK (79 aa)) constitute an RRM domain. Positions 61-80 (DAKDVARDMNGKSLDGKAIK) are enriched in basic and acidic residues. The interval 61-388 (DAKDVARDMN…SDRGGGQKQI (328 aa)) is disordered. A Glycyl lysine isopeptide (Lys-Gly) (interchain with G-Cter in SUMO2) cross-link involves residue Lys-80. Phosphoserine is present on Ser-88. The span at 148-161 (RGPPPRSGGPPPKR) shows a compositional bias: pro residues. Composition is skewed to basic and acidic residues over residues 191-212 (PRRE…DGYS) and 238-271 (YTYR…EYSD). Positions 320–332 (SRDSYSSSRSDLY) are enriched in low complexity. Basic and acidic residues-rich tracts occupy residues 333 to 344 (SSDRDRVGRQER) and 377 to 388 (SRSDRGGGQKQI).

It localises to the nucleus. RNA-binding protein which may be involved in pre-mRNA splicing. The chain is RNA binding motif protein, X-linked-like-1 (Rbmxl1) from Rattus norvegicus (Rat).